The following is a 483-amino-acid chain: PAT complex subunit CCDC47 (483 aa).

The first 20 residues, 1–20, serve as a signal peptide directing secretion; that stretch reads MKAFHTFCVVLLVFGSVSEA. At 21–135 the chain is on the cytoplasmic side; sequence KFDDFEDEED…PAHLQNSWES (115 aa). Residues 46-118 are disordered; it reads MEDSVTESPQ…PDTSSSKNKD (73 aa). A compositionally biased stretch (acidic residues) spans 60–104; that stretch reads TEDDEDETTVELEGQDENQEGDFEDADTQEGDTESEPYDDEEFEG. The span at 105 to 118 shows a compositional bias: basic and acidic residues; the sequence is YEDKPDTSSSKNKD. A helical transmembrane segment spans residues 136–155; it reads YYLEILMVTGLLAYIMNYII. Residues 156 to 483 are Lumenal-facing; sequence GKNKNSRLAQ…KMKQIKVKAM (328 aa). Residue N178 is glycosylated (N-linked (GlcNAc...) asparagine). Positions 424 to 483 are disordered; sequence QRQEAAQSRREEKKRAEKERIMNEEDPEKQRRLEEAALRREQKKLEKKQMKMKQIKVKAM. Basic and acidic residues predominate over residues 430–472; that stretch reads QSRREEKKRAEKERIMNEEDPEKQRRLEEAALRREQKKLEKKQ. Positions 450 to 483 form a coiled coil; sequence PEKQRRLEEAALRREQKKLEKKQMKMKQIKVKAM. The span at 473–483 shows a compositional bias: basic residues; that stretch reads MKMKQIKVKAM.

This sequence belongs to the CCDC47 family. As to quaternary structure, component of the PAT complex, composed of WDR83OS/Asterix and CCDC47. The PAT complex is part of the multi-pass translocon (MPT) complex, composed of three subcomplexes, the GEL complex (composed of RAB5IF/OPTI and TMCO1), the BOS complex (composed of NCLN/Nicalin, NOMO and TMEM147) and the PAT complex (composed of WDR83OS/Asterix and CCDC47). The MPT complex associates with the SEC61 complex. Interacts with VCP, HSPA5, DERL1, DERL2 and SELENOS.

The protein localises to the endoplasmic reticulum membrane. It localises to the rough endoplasmic reticulum membrane. In terms of biological role, component of the multi-pass translocon (MPT) complex that mediates insertion of multi-pass membrane proteins into the lipid bilayer of membranes. The MPT complex takes over after the SEC61 complex: following membrane insertion of the first few transmembrane segments of proteins by the SEC61 complex, the MPT complex occludes the lateral gate of the SEC61 complex to promote insertion of subsequent transmembrane regions. Within the MPT complex, the PAT subcomplex sequesters any highly polar regions in the transmembrane domains away from the non-polar membrane environment until they can be buried in the interior of the fully assembled protein. Within the PAT subcomplex, CCDC47 occludes the lateral gate of the SEC61 complex. Involved in the regulation of calcium ion homeostasis in the ER. Required for proper protein degradation via the ERAD (ER-associated degradation) pathway. Has an essential role in the maintenance of ER organization during embryogenesis. The protein is PAT complex subunit CCDC47 of Homo sapiens (Human).